A 411-amino-acid chain; its full sequence is Glycerol-3-phosphate dehydrogenase [NAD(+)] (411 aa).

NAD(+) contacts are provided by residues 71-76 (GSGNWG), F103, and F159. K182 contacts substrate. A215 contributes to the NAD(+) binding site. The active-site Proton acceptor is the K275. Residues R340 and Q369 each contribute to the NAD(+) site. A substrate-binding site is contributed by 340 to 341 (RN).

Belongs to the NAD-dependent glycerol-3-phosphate dehydrogenase family.

The enzyme catalyses sn-glycerol 3-phosphate + NAD(+) = dihydroxyacetone phosphate + NADH + H(+). This chain is Glycerol-3-phosphate dehydrogenase [NAD(+)] (GPD), found in Lachancea thermotolerans (Yeast).